The chain runs to 530 residues: Type 2 DNA topoisomerase 6 subunit B (530 aa).

ATP-binding positions include Asn42, Asp76, 97-98, 106-113, and Lys427; these read SK and GMYGLGVK.

The protein belongs to the TOP6B family. In terms of assembly, homodimer. Heterotetramer of two Top6A and two Top6B chains.

It catalyses the reaction ATP-dependent breakage, passage and rejoining of double-stranded DNA.. Its function is as follows. Relaxes both positive and negative superturns and exhibits a strong decatenase activity. The polypeptide is Type 2 DNA topoisomerase 6 subunit B (Saccharolobus islandicus (strain Y.N.15.51 / Yellowstone #2) (Sulfolobus islandicus)).